Consider the following 320-residue polypeptide: Thymidine kinase (320 aa).

An ATP-binding site is contributed by 10–17; it reads GAYDTGKS. The active-site Proton acceptor is the Glu-33. 2 residues coordinate substrate: Tyr-51 and Gln-75. Position 162 (Arg-162) interacts with ATP. A substrate-binding site is contributed by Arg-168.

It belongs to the herpesviridae thymidine kinase family. In terms of assembly, homodimer.

The catalysed reaction is thymidine + ATP = dTMP + ADP + H(+). Catalyzes the transfer of the gamma-phospho group of ATP to thymidine to generate dTMP in the salvage pathway of pyrimidine synthesis. The dTMP serves as a substrate for DNA polymerase during viral DNA replication. Allows the virus to be reactivated and to grow in non-proliferative cells lacking a high concentration of phosphorylated nucleic acid precursors. The protein is Thymidine kinase of Suid herpesvirus 1 (strain NIA-3) (SuHV-1).